The sequence spans 456 residues: MKIEEVKSTTKTQRIATHSHVKGLGLDENGIAKQAAAGLVGQENAREACGVIVELIKSKKMAGRAVLLAGPPGTGKTALALAIAQELGNKVPFCPMVGSEVYSTEIKKTEVLMENFRRAIGLRIRETKEVYEGEVTELTPCETENPMGGYGKTISHVIIGLKTAKGTKQLKLDPSIYESLQKERVEVGDVIYIEANSGAVKRQGRSDTYATEFDLEAEEYVPLPKGDVHQKKEVIQDVTLHDLDVANARPQGGQDILSMMGQLMKPKKTEITDKLRGQINKVVNKYIDQGIAELVPGVLFIDEVHMLDIECFTYLHRALESSLAPIVIFATNRGNCIIRGTEDVASPHGIPLDLLDRVMIIRTMLYTPQEMKQIIKIRAQTEGINISEEALNHLGEIGTKTTLRYSVQLLTPANLLAKINGKDSIEKEHVEEINELFYDAKSSAKILAEQQEKFMK.

ATP is bound at residue 70–77 (GPPGTGKT).

Belongs to the RuvB family. As to quaternary structure, forms homohexameric rings. Can form a dodecamer with ruvbl2 made of two stacked hexameric rings. Is a component of the RNA polymerase II holoenzyme complex. Component of the chromatin-remodeling Ino80 complex. Component of some MLL1/MLL complex.

The protein resides in the nucleus. It is found in the dynein axonemal particle. It catalyses the reaction ATP + H2O = ADP + phosphate + H(+). Its function is as follows. Has single-stranded DNA-stimulated ATPase and ATP-dependent DNA helicase (3' to 5') activity suggesting a role in nuclear processes such as recombination and transcription. Proposed core component of the chromatin remodeling INO80 complex which exhibits DNA- and nucleosome-activated ATPase activity and catalyzes ATP-dependent nucleosome sliding. This Xenopus laevis (African clawed frog) protein is RuvB-like 1 (ruvbl1).